A 155-amino-acid chain; its full sequence is Small ribosomal subunit protein uS7 (155 aa).

Belongs to the universal ribosomal protein uS7 family. In terms of assembly, part of the 30S ribosomal subunit. Contacts proteins S9 and S11.

Functionally, one of the primary rRNA binding proteins, it binds directly to 16S rRNA where it nucleates assembly of the head domain of the 30S subunit. Is located at the subunit interface close to the decoding center, probably blocks exit of the E-site tRNA. The polypeptide is Small ribosomal subunit protein uS7 (Petrotoga mobilis (strain DSM 10674 / SJ95)).